Consider the following 198-residue polypeptide: RNA 2',3'-cyclic phosphodiesterase (198 aa).

The active-site Proton donor is H39. 2 consecutive short sequence motifs (HXTX) follow at residues 39–42 (HLTL) and 130–133 (HITL). H130 functions as the Proton acceptor in the catalytic mechanism.

It belongs to the 2H phosphoesterase superfamily. ThpR family.

It catalyses the reaction a 3'-end 2',3'-cyclophospho-ribonucleotide-RNA + H2O = a 3'-end 2'-phospho-ribonucleotide-RNA + H(+). In terms of biological role, hydrolyzes RNA 2',3'-cyclic phosphodiester to an RNA 2'-phosphomonoester. This is RNA 2',3'-cyclic phosphodiesterase from Thermus thermophilus (strain ATCC 27634 / DSM 579 / HB8).